The following is a 293-amino-acid chain: Acetylglutamate kinase (293 aa).

Substrate contacts are provided by residues 68–69 (GG), R90, and N189.

The protein belongs to the acetylglutamate kinase family. ArgB subfamily.

It is found in the cytoplasm. It catalyses the reaction N-acetyl-L-glutamate + ATP = N-acetyl-L-glutamyl 5-phosphate + ADP. It functions in the pathway amino-acid biosynthesis; L-arginine biosynthesis; N(2)-acetyl-L-ornithine from L-glutamate: step 2/4. In terms of biological role, catalyzes the ATP-dependent phosphorylation of N-acetyl-L-glutamate. The chain is Acetylglutamate kinase from Caldicellulosiruptor saccharolyticus (strain ATCC 43494 / DSM 8903 / Tp8T 6331).